Reading from the N-terminus, the 984-residue chain is Glutamate [NMDA] receptor subunit 1 (984 aa).

The first 24 residues, 1-24 (MAAAFAYRWLLCAAGIVNVLPIGA), serve as a signal peptide directing secretion. Residues 25 to 570 (QRHTASDNPS…TLVSFLQPFS (546 aa)) are Extracellular-facing. 7 N-linked (GlcNAc...) asparagine glycosylation sites follow: Asn255, Asn311, Asn342, Asn394, Asn451, Asn478, and Asn498. Glycine is bound by residues 527–529 (PLT) and Arg534. A helical transmembrane segment spans residues 571 to 591 (NTLWILVMVSVHVVALVLYLL). Residues 592-648 (DRFSPFGRFKLSHSDSNEEKALNLSSAVWFAWGVLLNSGIGEGTPRSFSARVLGMVW) are Cytoplasmic-facing. The chain crosses the membrane as a helical span at residues 649–669 (AGFAMIIVASYTANLAAFLVL). The Extracellular portion of the chain corresponds to 670–828 (ERPKTKLSGI…KTPNTLGLKN (159 aa)). Asn690 carries N-linked (GlcNAc...) asparagine glycosylation. Glycine is bound by residues Ser700 and Asp744. The helical transmembrane segment at 829 to 849 (MAGVFILVGVGIAGGVGLIII) threads the bilayer. Residues 850–984 (EVIYKKHQVK…YTSDVSHLVV (135 aa)) lie on the Cytoplasmic side of the membrane. Residues 947–984 (KSGLVPPALGLGKTRPQQNPLPPRYSPGYTSDVSHLVV) are disordered. The segment covering 974 to 984 (GYTSDVSHLVV) has biased composition (polar residues).

This sequence belongs to the glutamate-gated ion channel (TC 1.A.10.1) family. In terms of assembly, forms a heteromeric NMDA channel with Nmdar2.

It is found in the cell membrane. Its subcellular location is the postsynaptic cell membrane. The protein localises to the postsynaptic density. NMDA receptor subtype of glutamate-gated ion channels with high calcium permeability and voltage-dependent sensitivity to magnesium. Mediated by glycine. This protein plays a key role in synaptic plasticity, synaptogenesis, excitotoxicity, memory acquisition and learning. It mediates neuronal functions in glutamate neurotransmission. Is involved in the cell surface targeting of NMDA receptors. Plays a role in associative learning and in long-term memory consolidation. The protein is Glutamate [NMDA] receptor subunit 1 of Drosophila virilis (Fruit fly).